We begin with the raw amino-acid sequence, 494 residues long: Neuronal acetylcholine receptor subunit alpha-6 (494 aa).

The N-terminal stretch at 1–25 is a signal peptide; it reads MLTSKGQGFLHGGLCLWLCVFTPFF. Over 26–239 the chain is Extracellular; that stretch reads KGCVGCATEE…ITYSFYIRRL (214 aa). N-linked (GlcNAc...) asparagine glycans are attached at residues Asn-54 and Asn-171. 2 disulfide bridges follow: Cys-158-Cys-172 and Cys-222-Cys-223. The next 3 helical transmembrane spans lie at 240–264, 272–290, and 306–327; these read PMFY…VFYL, VTLC…LVIT, and YLLF…VLNI. Topologically, residues 328 to 465 are cytoplasmic; the sequence is HYRTPTTHTM…WKYVAMVVDR (138 aa). Ser-401 is subject to Phosphoserine. The helical transmembrane segment at 466-484 threads the bilayer; the sequence is VFLWVFIIVCVFGTAGLFL.

Belongs to the ligand-gated ion channel (TC 1.A.9) family. Acetylcholine receptor (TC 1.A.9.1) subfamily. Alpha-6/CHRNA6 sub-subfamily. Neuronal AChR is composed of two different types of subunits: alpha and non-alpha (beta). CHRNA6/alpha-6 subunit can be combined to CHRNB2/beta-2, CHRNA4/alpha-4 and CHRNB3/beta-3 to give rise to functional receptors. Heteropentamers containing CHRNB3 have an stoichiometry of (CHRNA6:CHRNB2)2:CHRNB3. Interacts with LYPD6.

Its subcellular location is the synaptic cell membrane. The enzyme catalyses Ca(2+)(in) = Ca(2+)(out). It catalyses the reaction K(+)(in) = K(+)(out). It carries out the reaction Na(+)(in) = Na(+)(out). Its activity is regulated as follows. Activated by a myriad of ligands such as acetylcholine, cytisine and nicotine. CHRNA6 nAChR activity is inhibited by the antagonists alpha-conotoxin MII and PIA, a small disulfide-constrained peptides from cone snails. Its function is as follows. Component of neuronal acetylcholine receptors (nAChRs) that function as pentameric, ligand-gated cation channels with high calcium permeability among other activities. nAChRs are excitatory neurotrasnmitter receptors formed by a collection of nAChR subunits known to mediate synaptic transmission in the nervous system and the neuromuscular junction. Each nAchR subunit confers differential attributes to channel properties, including activation, deactivation and desensitization kinetics, pH sensitivity, cation permeability, and binding to allosteric modulators. CHRNA6 forms pentameric channels with CHRNB2, CHRNB3 and CHRNA4 that exhibit high sensitivity to ACh and nicotine and are predominantly expressed in only a few brain areas, including dopaminergic neurons, norepirephrine neurons and cells of the visual system. nAChrs containing CHRNA6 subunits mediate endogenous cholinergic modulation of dopamine and gamma-aminobutyric acid (GABA) release in response to nicotine at nerve terminals. In Pan troglodytes (Chimpanzee), this protein is Neuronal acetylcholine receptor subunit alpha-6 (CHRNA6).